The sequence spans 211 residues: Endo-1,4-beta-xylanase 4 (211 aa).

An N-terminal signal peptide occupies residues 1-16 (MKVTAAFAGLLVTAFA). The region spanning 19-210 (VPEPVLVSRS…GACSASVTIS (192 aa)) is the GH11 domain. N101 is a glycosylation site (N-linked (GlcNAc...) asparagine). E106 acts as the Nucleophile in catalysis. E197 acts as the Proton donor in catalysis.

Belongs to the glycosyl hydrolase 11 (cellulase G) family.

It localises to the secreted. It carries out the reaction Endohydrolysis of (1-&gt;4)-beta-D-xylosidic linkages in xylans.. Its pathway is glycan degradation; xylan degradation. Endo-1,4-beta-xylanase involved in the hydrolysis of xylan, a major structural heterogeneous polysaccharide found in plant biomass representing the second most abundant polysaccharide in the biosphere, after cellulose. This Aspergillus niger protein is Endo-1,4-beta-xylanase 4 (XYN4).